The following is a 319-amino-acid chain: Cytochrome c biogenesis protein CcsA (319 aa).

7 helical membrane passes run 9 to 29, 44 to 64, 68 to 88, 143 to 163, 223 to 243, 257 to 271, and 286 to 306; these read ILTH…LITL, GMIV…ASSG, LSNL…LHTI, MLLS…ILII, VISL…VWAN, TWAF…IYLH, and VASI…LLGI.

Belongs to the CcmF/CycK/Ccl1/NrfE/CcsA family. May interact with Ccs1.

It is found in the plastid. The protein localises to the chloroplast thylakoid membrane. Required during biogenesis of c-type cytochromes (cytochrome c6 and cytochrome f) at the step of heme attachment. This is Cytochrome c biogenesis protein CcsA from Agrostis stolonifera (Creeping bentgrass).